Here is a 300-residue protein sequence, read N- to C-terminus: Putative S-adenosyl-L-methionine-dependent methyltransferase MAB_4328c (300 aa).

S-adenosyl-L-methionine contacts are provided by residues aspartate 126 and 155–156; that span reads DL.

The protein belongs to the UPF0677 family.

Functionally, exhibits S-adenosyl-L-methionine-dependent methyltransferase activity. The protein is Putative S-adenosyl-L-methionine-dependent methyltransferase MAB_4328c of Mycobacteroides abscessus (strain ATCC 19977 / DSM 44196 / CCUG 20993 / CIP 104536 / JCM 13569 / NCTC 13031 / TMC 1543 / L948) (Mycobacterium abscessus).